Consider the following 97-residue polypeptide: MEIKTTAVAGTLESSDIQIMISKGSDGIKIDLESEVKKAYGDQIEKVITETLKKYGLDNVNIKATDKGALDCVIKARTLAAAQRATETQDKPDLEVL.

Ser14 bears the O-(phosphoribosyl dephospho-coenzyme A)serine mark.

It belongs to the CitD family. Oligomer with a subunit composition of (alpha,beta,gamma)6.

Its subcellular location is the cytoplasm. Functionally, covalent carrier of the coenzyme of citrate lyase. In Lactobacillus acidophilus (strain ATCC 700396 / NCK56 / N2 / NCFM), this protein is Citrate lyase acyl carrier protein.